Reading from the N-terminus, the 127-residue chain is Glycine cleavage system H protein (127 aa).

Residues 24 to 105 enclose the Lipoyl-binding domain; sequence TALVGITDFA…YGSGWMVKMK (82 aa). Lys65 carries the N6-lipoyllysine modification.

This sequence belongs to the GcvH family. As to quaternary structure, the glycine cleavage system is composed of four proteins: P, T, L and H. (R)-lipoate serves as cofactor.

Functionally, the glycine cleavage system catalyzes the degradation of glycine. The H protein shuttles the methylamine group of glycine from the P protein to the T protein. The chain is Glycine cleavage system H protein from Chlorobium luteolum (strain DSM 273 / BCRC 81028 / 2530) (Pelodictyon luteolum).